The primary structure comprises 135 residues: U-myrmeciitoxin(01)-Mg7a (135 aa).

An N-terminal signal peptide occupies residues Met1 to Ser21. Positions Pro22 to Ala72 are excised as a propeptide. Residues Glu69–Ile95 form a disordered region. Over residues Ser75–Ile93 the composition is skewed to basic residues. Ser120 carries O-linked (GalNAc...) serine glycosylation. 2 O-linked (GalNAc...) threonine glycosylation sites follow: Thr129 and Thr130.

This sequence belongs to the formicidae venom precursor-01 superfamily. In terms of processing, glycosylation is critical to maintaining the aqueous solubility of this protein, but does not directly contribute to its activity. As to expression, expressed by the venom gland.

It is found in the secreted. Its subcellular location is the target cell membrane. Neurotoxin that triggers pain behavior and inflammation in mammals, and is paralytic and lethal to insects. Causes a time-dependent increase in cell leak current. May act by targeting membranes. The protein is U-myrmeciitoxin(01)-Mg7a of Myrmecia gulosa (Red bulldog ant).